Consider the following 106-residue polypeptide: MSKFYEWISPDSDVLELEKTGLKPPPMYKVVLNNDDYTPMEFVVEVLDKFFSMDLEKATQLMLTVHYEGKAVCGVFTAEVAETKVAQVNIYSRDNEHPLLCTMEQA.

The protein belongs to the ClpS family. In terms of assembly, binds to the N-terminal domain of the chaperone ClpA.

Its function is as follows. Involved in the modulation of the specificity of the ClpAP-mediated ATP-dependent protein degradation. In Aliivibrio salmonicida (strain LFI1238) (Vibrio salmonicida (strain LFI1238)), this protein is ATP-dependent Clp protease adapter protein ClpS.